Consider the following 635-residue polypeptide: BTB/POZ domain-containing protein SETH6 (635 aa).

The 66-residue stretch at 39–104 (SDLTIEVGSA…CYGVGVQYNS (66 aa)) folds into the BTB domain. Positions 206-494 (DWWGRSLPIL…VQVLFYEQTR (289 aa)) constitute an NPH3 domain. Tyr-435 bears the Phosphotyrosine mark. Positions 604 to 635 (QSVASSGKKHTEEKTNSERRFMFQKRRCHSVS) are disordered. Residues 612–624 (KHTEEKTNSERRF) are compositionally biased toward basic and acidic residues. The segment covering 625–635 (MFQKRRCHSVS) has biased composition (basic residues).

The protein belongs to the NPH3 family.

Its pathway is protein modification; protein ubiquitination. In terms of biological role, may act as a substrate-specific adapter of an E3 ubiquitin-protein ligase complex (CUL3-RBX1-BTB) which mediates the ubiquitination and subsequent proteasomal degradation of target proteins. This is BTB/POZ domain-containing protein SETH6 (SETH6) from Arabidopsis thaliana (Mouse-ear cress).